Reading from the N-terminus, the 220-residue chain is Large ribosomal subunit protein uL3 (220 aa).

Residues 61–81 (KGSKSNKYANKPAEGHAKKAD) are disordered.

Belongs to the universal ribosomal protein uL3 family. Part of the 50S ribosomal subunit. Forms a cluster with proteins L14 and L19.

Its function is as follows. One of the primary rRNA binding proteins, it binds directly near the 3'-end of the 23S rRNA, where it nucleates assembly of the 50S subunit. The chain is Large ribosomal subunit protein uL3 from Staphylococcus epidermidis (strain ATCC 35984 / DSM 28319 / BCRC 17069 / CCUG 31568 / BM 3577 / RP62A).